A 206-amino-acid polypeptide reads, in one-letter code: Ribosomal RNA large subunit methyltransferase E (206 aa).

S-adenosyl-L-methionine contacts are provided by Gly60, Trp62, Asp80, Asp96, and Asp121. The Proton acceptor role is filled by Lys161.

This sequence belongs to the class I-like SAM-binding methyltransferase superfamily. RNA methyltransferase RlmE family.

The protein resides in the cytoplasm. The enzyme catalyses uridine(2552) in 23S rRNA + S-adenosyl-L-methionine = 2'-O-methyluridine(2552) in 23S rRNA + S-adenosyl-L-homocysteine + H(+). In terms of biological role, specifically methylates the uridine in position 2552 of 23S rRNA at the 2'-O position of the ribose in the fully assembled 50S ribosomal subunit. The protein is Ribosomal RNA large subunit methyltransferase E of Hahella chejuensis (strain KCTC 2396).